The primary structure comprises 211 residues: Ribosomal RNA large subunit methyltransferase E (211 aa).

Residues G60, W62, D85, D101, and D126 each contribute to the S-adenosyl-L-methionine site. Catalysis depends on K166, which acts as the Proton acceptor.

This sequence belongs to the class I-like SAM-binding methyltransferase superfamily. RNA methyltransferase RlmE family.

The protein localises to the cytoplasm. It carries out the reaction uridine(2552) in 23S rRNA + S-adenosyl-L-methionine = 2'-O-methyluridine(2552) in 23S rRNA + S-adenosyl-L-homocysteine + H(+). Functionally, specifically methylates the uridine in position 2552 of 23S rRNA at the 2'-O position of the ribose in the fully assembled 50S ribosomal subunit. The protein is Ribosomal RNA large subunit methyltransferase E of Bordetella petrii (strain ATCC BAA-461 / DSM 12804 / CCUG 43448).